We begin with the raw amino-acid sequence, 466 residues long: Asparagine--tRNA ligase (466 aa).

This sequence belongs to the class-II aminoacyl-tRNA synthetase family. As to quaternary structure, homodimer.

It is found in the cytoplasm. The catalysed reaction is tRNA(Asn) + L-asparagine + ATP = L-asparaginyl-tRNA(Asn) + AMP + diphosphate + H(+). The chain is Asparagine--tRNA ligase from Xylella fastidiosa (strain 9a5c).